A 494-amino-acid chain; its full sequence is Inositol-trisphosphate 3-kinase homolog (494 aa).

ATP is bound by residues Ser206, Lys218, 260–262 (EDL), and Asp276. Substrate contacts are provided by residues Lys278 and 322 to 329 (KLRYMQFR). Residues Lys346 and Asp426 each coordinate ATP. Lys429 is a binding site for substrate.

Belongs to the inositol phosphokinase (IPK) family. In terms of tissue distribution, expressed in spermatheca.

The enzyme catalyses 1D-myo-inositol 1,4,5-trisphosphate + ATP = 1D-myo-inositol 1,3,4,5-tetrakisphosphate + ADP + H(+). Unlike mammalian IP3K, may not be regulated by calmodulin. Its function is as follows. Probably by regulating inositol 1,4,5-trisphosphate levels, negatively regulates posterior body wall muscle contractions required for defecation and let-23 signaling pathway that controls spermathecal dilation and ovulation. May also regulate ovulation downstream of actin cross-linker fln-1. The polypeptide is Inositol-trisphosphate 3-kinase homolog (Caenorhabditis elegans).